The sequence spans 139 residues: uncharacterized protein (139 aa).

A helical membrane pass occupies residues 43-59 (FGVISTLIAIFIGAFWL).

It is found in the membrane. This is an uncharacterized protein from Haemophilus influenzae (strain ATCC 51907 / DSM 11121 / KW20 / Rd).